Reading from the N-terminus, the 350-residue chain is E3 ubiquitin-protein ligase TRIM63 (350 aa).

An RING-type zinc finger spans residues 23–79; the sequence is CPICLEMFTKPVVILPCQHNLCRKCANDIFQAANPYWTNRGGSVSMSGGRFRCPSCR. The segment at 74 to 218 is interaction with TTN; that stretch reads RCPSCRHEVI…LSQKFDTLYA (145 aa). The segment at 117 to 159 adopts a B box-type zinc-finger fold; sequence GSHPMCKEHEDEKINIYCLTCEVPTCSLCKVFGAHQACEVAPL. Zn(2+) contacts are provided by cysteine 122, histidine 125, cysteine 145, and histidine 151. Positions 207–269 form a coiled coil; sequence EELSQKFDTL…VETAIQSLDE (63 aa). The 59-residue stretch at 267–325 folds into the COS domain; that stretch reads LDEPGGATFLSSAKQLIKSNVEASKGCQLGKTEQGFENMDYFTLDLEHIAEALRAIDFG. Acidic residues predominate over residues 325–344; the sequence is GTDEEEEEFTEEEADEEEGV. The tract at residues 325–350 is disordered; that stretch reads GTDEEEEEFTEEEADEEEGVTTEGHQ.

As to quaternary structure, homodimer. Homooligomer and heterooligomer. Interacts with SUMO2, titin/TTN and GMEB1. Interacts with TRIM54 and probably with TRIM55. Interacts with TNNI3. Forms a ternary complex with RACK1 and PRKCE. Interacts with CKM.

Its subcellular location is the cytoplasm. The protein resides in the nucleus. It is found in the myofibril. It localises to the sarcomere. The protein localises to the m line. Its subcellular location is the z line. The enzyme catalyses S-ubiquitinyl-[E2 ubiquitin-conjugating enzyme]-L-cysteine + [acceptor protein]-L-lysine = [E2 ubiquitin-conjugating enzyme]-L-cysteine + N(6)-ubiquitinyl-[acceptor protein]-L-lysine.. It participates in protein modification; protein ubiquitination. In terms of biological role, E3 ubiquitin ligase. Mediates the ubiquitination and subsequent proteasomal degradation of CKM, GMEB1 and HIBADH. Regulates the proteasomal degradation of muscle proteins under amino acid starvation, where muscle protein is catabolized to provide other organs with amino acids. Inhibits de novo skeletal muscle protein synthesis under amino acid starvation. Regulates proteasomal degradation of cardiac troponin I/TNNI3 and probably of other sarcomeric-associated proteins. May play a role in striated muscle atrophy and hypertrophy by regulating an anti-hypertrophic PKC-mediated signaling pathway. May regulate the organization of myofibrils through TTN in muscle cells. This chain is E3 ubiquitin-protein ligase TRIM63 (Trim63), found in Mus musculus (Mouse).